The following is a 159-amino-acid chain: Ribosomal RNA large subunit methyltransferase H (159 aa).

S-adenosyl-L-methionine-binding positions include Leu76, Gly108, and 127 to 132 (FSNMTF).

Belongs to the RNA methyltransferase RlmH family. As to quaternary structure, homodimer.

Its subcellular location is the cytoplasm. The catalysed reaction is pseudouridine(1915) in 23S rRNA + S-adenosyl-L-methionine = N(3)-methylpseudouridine(1915) in 23S rRNA + S-adenosyl-L-homocysteine + H(+). Functionally, specifically methylates the pseudouridine at position 1915 (m3Psi1915) in 23S rRNA. The chain is Ribosomal RNA large subunit methyltransferase H from Staphylococcus epidermidis (strain ATCC 35984 / DSM 28319 / BCRC 17069 / CCUG 31568 / BM 3577 / RP62A).